Here is a 454-residue protein sequence, read N- to C-terminus: Inner membrane permease YgbN (454 aa).

Residue methionine 1 is a topological domain, periplasmic. The chain crosses the membrane as a helical span at residues 2–22 (STITLLCIALAGVIMLLLLVI). Topologically, residues 23–27 (KAKVQ) are cytoplasmic. A helical transmembrane segment spans residues 28 to 48 (PFVALLLVSLLVALAAGIPAG). At 49–52 (EVGK) the chain is on the periplasmic side. A helical membrane pass occupies residues 53 to 73 (VMIAGMGGVLGSVTIIIGLGA). Over 74–108 (MLGRMIEHSGGAESLANYFSRKLGDKRTIAALTLA) the chain is Cytoplasmic. Residues 109–129 (AFFLGIPVFFDVGFIILAPII) form a helical membrane-spanning segment. Over 130–137 (YGFAKVAK) the chain is Periplasmic. A helical transmembrane segment spans residues 138 to 158 (ISPLKFGLPVAGIMLTVHVAV). Topologically, residues 159–174 (PPHPGPVAAAGLLHAD) are cytoplasmic. The chain crosses the membrane as a helical span at residues 175-195 (IGWLTIIGIAISIPVGVVGYF). Over 196-235 (AAKIINKRQYAMSVEVLEQMQLAPASEEGATKLSDKINPP) the chain is Periplasmic. Residues 236 to 256 (GVALVTSLIVIPIAIIMAGTV) traverse the membrane as a helical segment. At 257–273 (SATLMPPSHPLLGTLQL) the chain is on the cytoplasmic side. The chain crosses the membrane as a helical span at residues 274–294 (IGSPMVALMIALVLAFWLLAL). Topologically, residues 295–305 (RRGWSLQHTSD) are periplasmic. Residues 306-326 (IMGSALPTAAVVILVTGAGGV) traverse the membrane as a helical segment. At 327–341 (FGKVLVESGVGKALA) the chain is on the cytoplasmic side. Residues 342–362 (NMLQMIDLPLLPAAFIISLAL) traverse the membrane as a helical segment. The Periplasmic portion of the chain corresponds to 363-383 (RASQGSATVAILTTGGLLSEA). The helical transmembrane segment at 384–404 (VMGLNPIQCVLVTLAACFGGL) threads the bilayer. The Cytoplasmic portion of the chain corresponds to 405 to 433 (GASHINDSGFWIVTKYLGLSVADGLKTWT). The helical transmembrane segment at 434–454 (VLTTILGFTGFLITWCVWAVI) threads the bilayer.

It belongs to the GntP permease family.

Its subcellular location is the cell inner membrane. In Escherichia coli (strain K12), this protein is Inner membrane permease YgbN (ygbN).